A 200-amino-acid chain; its full sequence is uncharacterized protein (200 aa).

This is an uncharacterized protein from Methanocaldococcus jannaschii (strain ATCC 43067 / DSM 2661 / JAL-1 / JCM 10045 / NBRC 100440) (Methanococcus jannaschii).